Consider the following 269-residue polypeptide: Extracellular metalloprotease UREG_07765 (269 aa).

The first 18 residues, 1–18, serve as a signal peptide directing secretion; sequence MRLSVSLLALAFGSLVAA. A glycan (N-linked (GlcNAc...) asparagine) is linked at Asn-179. His-191 is a Zn(2+) binding site. Glu-192 is an active-site residue. His-195 serves as a coordination point for Zn(2+). The disordered stretch occupies residues 207–227; it reads VSDTPPQRSSTQGCPSSRDSC. Positions 210–225 are enriched in polar residues; that stretch reads TPPQRSSTQGCPSSRD. Cysteines 220 and 246 form a disulfide.

Belongs to the peptidase M43B family.

It is found in the secreted. Functionally, secreted metalloproteinase that allows assimilation of proteinaceous substrates. The polypeptide is Extracellular metalloprotease UREG_07765 (Uncinocarpus reesii (strain UAMH 1704)).